Reading from the N-terminus, the 24-residue chain is Glutathione S-transferase (24 aa).

This sequence belongs to the GST superfamily. As to quaternary structure, monomer and homodimer.

Its subcellular location is the cytoplasm. The enzyme catalyses RX + glutathione = an S-substituted glutathione + a halide anion + H(+). Its function is as follows. Conjugation of reduced glutathione to a wide number of exogenous and endogenous hydrophobic electrophiles. The chain is Glutathione S-transferase from Pseudomonas sp. (strain CF600).